A 595-amino-acid polypeptide reads, in one-letter code: Elongation factor 4 (595 aa).

The tr-type G domain maps to 2 to 184; that stretch reads KNIRNFSIIA…QIVEKIPAPK (183 aa). Residues 14–19 and 131–134 contribute to the GTP site; these read DHGKST and NKID.

It belongs to the TRAFAC class translation factor GTPase superfamily. Classic translation factor GTPase family. LepA subfamily.

The protein localises to the cell inner membrane. The enzyme catalyses GTP + H2O = GDP + phosphate + H(+). In terms of biological role, required for accurate and efficient protein synthesis under certain stress conditions. May act as a fidelity factor of the translation reaction, by catalyzing a one-codon backward translocation of tRNAs on improperly translocated ribosomes. Back-translocation proceeds from a post-translocation (POST) complex to a pre-translocation (PRE) complex, thus giving elongation factor G a second chance to translocate the tRNAs correctly. Binds to ribosomes in a GTP-dependent manner. In Ruthia magnifica subsp. Calyptogena magnifica, this protein is Elongation factor 4.